The sequence spans 218 residues: Ribosome maturation factor RimM (218 aa).

The 74-residue stretch at 141 to 214 (GELWWDRDLV…HIVVDPPPGL (74 aa)) folds into the PRC barrel domain.

The protein belongs to the RimM family. As to quaternary structure, binds ribosomal protein uS19.

It is found in the cytoplasm. Functionally, an accessory protein needed during the final step in the assembly of 30S ribosomal subunit, possibly for assembly of the head region. Essential for efficient processing of 16S rRNA. May be needed both before and after RbfA during the maturation of 16S rRNA. It has affinity for free ribosomal 30S subunits but not for 70S ribosomes. This is Ribosome maturation factor RimM from Parafrankia sp. (strain EAN1pec).